The chain runs to 1086 residues: Lysine-specific demethylase 4B (1086 aa).

The JmjN domain maps to 15–57 (IMTFRPTMDEFRDFNRYVAYIESQGAHRAGLAKIIPPKEWKPR). Position 133 (tyrosine 133) interacts with 2-oxoglutarate. One can recognise a JmjC domain in the interval 146–309 (VAQWNIGNLR…YGKVATQCTC (164 aa)). Residues histidine 189 and glutamate 191 each coordinate Fe cation. 2 residues coordinate 2-oxoglutarate: asparagine 199 and lysine 207. Zn(2+) is bound by residues cysteine 235 and histidine 241. Lysine 242 contacts 2-oxoglutarate. Residue histidine 277 coordinates Fe cation. Zn(2+)-binding residues include cysteine 307 and cysteine 309. Basic and acidic residues predominate over residues 379–395 (SRPWRKAEEERRREPTR). Disordered regions lie at residues 379 to 536 (SRPW…PPGA) and 575 to 624 (PMEL…LSVV). Over residues 401 to 410 (SHRRRSQPKK) the composition is skewed to basic residues. Over residues 441–450 (MPEDEEEEEL) the composition is skewed to acidic residues. Positions 456–467 (HEAEGVEEDGRG) are enriched in basic and acidic residues. The segment covering 468 to 480 (KPRPTKARNKKKT) has biased composition (basic residues). The span at 512–522 (GPAMGPMAAEG) shows a compositional bias: low complexity. The span at 585-597 (QAQAGDSQGTTPF) shows a compositional bias: polar residues. Lysine 599 is modified (N6-acetyllysine). The segment at 719 to 777 (MCFTSSGENTEPLPANSYVGEDGTSPLISCAHCCLQVHASCYGVRPELAKEGWTCSRCA) adopts a PHD-type 1 zinc-finger fold. A C2HC pre-PHD-type zinc finger spans residues 782–815 (TAECCLCNLRGGALQRTTEHRWIHVICAIAVPEV). The segment at 838-895 (LKCIYCRKRMKRVSGACIQCSYEHCSTSFHVTCAHAAGVLMEPDDWPYVVSITCLKHR) adopts a PHD-type 2 zinc-finger fold. 2 consecutive Tudor domains span residues 905–962 (RTVS…CLRL) and 963–1019 (GPPP…EELP). The interval 1024 to 1043 (SRLSLSTGTPQEPSFSGDDV) is disordered. Polar residues predominate over residues 1026 to 1037 (LSLSTGTPQEPS).

Belongs to the JHDM3 histone demethylase family. Requires Fe(2+) as cofactor.

It is found in the nucleus. It catalyses the reaction N(6),N(6),N(6)-trimethyl-L-lysyl(9)-[histone H3] + 2 2-oxoglutarate + 2 O2 = N(6)-methyl-L-lysyl(9)-[histone H3] + 2 formaldehyde + 2 succinate + 2 CO2. Its function is as follows. Histone demethylase that specifically demethylates 'Lys-9' of histone H3, thereby playing a role in histone code. Does not demethylate histone H3 'Lys-4', H3 'Lys-27', H3 'Lys-36' nor H4 'Lys-20'. Only able to demethylate trimethylated H3 'Lys-9', with a weaker activity than KDM4A, KDM4C and KDM4D. Demethylation of Lys residue generates formaldehyde and succinate. Plays a critical role in the development of the central nervous system (CNS). The chain is Lysine-specific demethylase 4B (Kdm4b) from Mus musculus (Mouse).